A 426-amino-acid chain; its full sequence is Serine--tRNA ligase (426 aa).

229–231 (TAE) is a binding site for L-serine. Residues 260-262 (RKE) and Val-276 contribute to the ATP site. Glu-283 contacts L-serine. 349 to 352 (EVTS) contributes to the ATP binding site. Position 384 (Thr-384) interacts with L-serine.

The protein belongs to the class-II aminoacyl-tRNA synthetase family. Type-1 seryl-tRNA synthetase subfamily. As to quaternary structure, homodimer. The tRNA molecule binds across the dimer.

It localises to the cytoplasm. The catalysed reaction is tRNA(Ser) + L-serine + ATP = L-seryl-tRNA(Ser) + AMP + diphosphate + H(+). The enzyme catalyses tRNA(Sec) + L-serine + ATP = L-seryl-tRNA(Sec) + AMP + diphosphate + H(+). It participates in aminoacyl-tRNA biosynthesis; selenocysteinyl-tRNA(Sec) biosynthesis; L-seryl-tRNA(Sec) from L-serine and tRNA(Sec): step 1/1. Its function is as follows. Catalyzes the attachment of serine to tRNA(Ser). Is also able to aminoacylate tRNA(Sec) with serine, to form the misacylated tRNA L-seryl-tRNA(Sec), which will be further converted into selenocysteinyl-tRNA(Sec). This Treponema pallidum (strain Nichols) protein is Serine--tRNA ligase.